The chain runs to 278 residues: Thioredoxin-related transmembrane protein 1 (278 aa).

The first 26 residues, 1–26 (MAPSGSLRIPVAVLLLLLWGAPWAHG), serve as a signal peptide directing secretion. Residues 27 to 132 (KRSDVRIITD…FINFISDKEW (106 aa)) enclose the Thioredoxin domain. Residues 27 to 180 (KRSDVRIITD…EDLGLPIWGS (154 aa)) lie on the Extracellular side of the membrane. Active-site nucleophile residues include cysteine 56 and cysteine 59. Cysteine 56 and cysteine 59 are joined by a disulfide. The chain crosses the membrane as a helical span at residues 181 to 203 (YTVFALATLLSGLLLGLFMIFVA). The Cytoplasmic segment spans residues 204-278 (DCLCPSKRRR…VGPSLATDKS (75 aa)). S-palmitoyl cysteine attachment occurs at residues cysteine 205 and cysteine 207. The segment at 213–278 (RPQPYPSRKL…VGPSLATDKS (66 aa)) is disordered. Phosphoserine is present on residues serine 226, serine 245, serine 268, serine 272, and serine 278. A compositionally biased stretch (acidic residues) spans 235 to 250 (EEQEADVEDVSEEESE).

Interacts with ATP2A2. In terms of processing, palmitoylated; palmitoylation is required for localization to mitochondria-associated endoplasmic reticulum membrane (MAM).

Its subcellular location is the endoplasmic reticulum membrane. The protein resides in the mitochondrion membrane. It is found in the secreted. The catalysed reaction is Catalyzes the rearrangement of -S-S- bonds in proteins.. Its function is as follows. Thiredoxin domain-containing protein that participates in various redox reactions through the reversible oxidation of its active center dithiol to a disulfide and catalyze dithiol-disulfide exchange reactions. Acts as a key inhibitor of the alternative triglyceride biosynthesis pathway by inhibiting the activity of TMEM68/DIESL at the endoplasmic reticulum, thereby restricting accumulation of triacylglycerol. The alternative triglyceride biosynthesis pathway mediates formation of triacylglycerol from diacylglycerol and membrane phospholipids. Acts as a protein disulfide isomerase by catalyzing formation or reduction of disulfide bonds. Specifically mediates formation of disulfide bonds of transmembrane proteins at the endoplasmic reticulum membrane. Involved in endoplasmic reticulum-associated degradation (ERAD) via its protein disulfide isomerase activity by acting on folding-defective polypeptides at the endoplasmic reticulum membrane. Acts as a negative regulator of platelet aggregation following secretion in the extracellular space. Acts as a regulator of endoplasmic reticulum-mitochondria contact sites via its ability to regulate redox signals. Regulates endoplasmic reticulum-mitochondria Ca(2+) flux. The chain is Thioredoxin-related transmembrane protein 1 (TMX1) from Bos taurus (Bovine).